A 700-amino-acid chain; its full sequence is Pyrroloquinoline quinone transporter (700 aa).

The first 23 residues, 1–23 (MKIFSVRQTVLPALLVLSPVVFA), serve as a signal peptide directing secretion. Positions 39-157 (SELDTPAAVS…SGGVMNVTTQ (119 aa)) constitute a TBDR plug domain. 24 consecutive transmembrane segments (beta stranded) span residues 132-136 (NVEVL), 150-160 (GVMNVTTQTGQ), 162-171 (PPTIEASSYY), 177-186 (WRYGLKATGA), 195-204 (DVDYTVSTTR), 220-227 (LANAKLGV), 233-241 (SKLSLIFNS), 280-288 (QAGLRYERS), 295-301 (MSVMMYA), 335-344 (GIDSRWTHRG), 350-358 (VTFTTGLNY), 398-405 (DPYLQTQW), 411-419 (LSLDAGVRY), 447-456 (WLPAGSLKYA), 464-468 (YLAAG), 500-509 (TIEIGSKTRI), 511-520 (DGLLSLALFQ), 549-556 (GAELAWDQ), 563-570 (RVNASWTW), 597-604 (MGFASIGY), 611-617 (YAGTEAR), 637-647 (LVGLFTGYKYN), 651-659 (LTVDLFGRV), and 689-697 (YGVGMNIAW). Positions 162–697 (PPTIEASSYY…NYGVGMNIAW (536 aa)) constitute a TBDR beta-barrel domain. The TonB C-terminal box motif lies at 680–700 (YYEPSPGRNYGVGMNIAWRFE).

This sequence belongs to the TonB-dependent receptor family.

The protein localises to the cell outer membrane. In terms of biological role, mediates the TonB-dependent high affinity transport across the outer membrane of pyrroloquinoline quinone (PQQ), a redox cofactor required for the activity of Gcd and Asd dehydrogenases. The uptake process is energised via the TonB-ExbBD complex. Not involved in the transport of an iron-containing substrate under laboratory conditions. The protein is Pyrroloquinoline quinone transporter of Escherichia coli (strain K12).